The sequence spans 259 residues: Ubiquinone/menaquinone biosynthesis C-methyltransferase UbiE (259 aa).

S-adenosyl-L-methionine is bound by residues Thr82, Asp103, and 131–132; that span reads NA.

The protein belongs to the class I-like SAM-binding methyltransferase superfamily. MenG/UbiE family.

The enzyme catalyses a 2-demethylmenaquinol + S-adenosyl-L-methionine = a menaquinol + S-adenosyl-L-homocysteine + H(+). The catalysed reaction is a 2-methoxy-6-(all-trans-polyprenyl)benzene-1,4-diol + S-adenosyl-L-methionine = a 5-methoxy-2-methyl-3-(all-trans-polyprenyl)benzene-1,4-diol + S-adenosyl-L-homocysteine + H(+). The protein operates within quinol/quinone metabolism; menaquinone biosynthesis; menaquinol from 1,4-dihydroxy-2-naphthoate: step 2/2. It participates in cofactor biosynthesis; ubiquinone biosynthesis. Functionally, methyltransferase required for the conversion of demethylmenaquinol (DMKH2) to menaquinol (MKH2) and the conversion of 2-polyprenyl-6-methoxy-1,4-benzoquinol (DDMQH2) to 2-polyprenyl-3-methyl-6-methoxy-1,4-benzoquinol (DMQH2). The polypeptide is Ubiquinone/menaquinone biosynthesis C-methyltransferase UbiE (Agrobacterium fabrum (strain C58 / ATCC 33970) (Agrobacterium tumefaciens (strain C58))).